A 113-amino-acid polypeptide reads, in one-letter code: MHEMSLCEGIRGIVGDQARRHGFATVKVLRLEIGRFAGVEKAALGFAFDVVMRGSAAEGARLEILDLPGRALCYDCGEEAAIEDRFDPCPLCGGGRLMPVGGDEMRIKDMEVQ.

Histidine 2 is a Ni(2+) binding site. Zn(2+)-binding residues include cysteine 73, cysteine 76, cysteine 89, and cysteine 92.

It belongs to the HypA/HybF family.

Its function is as follows. Involved in the maturation of [NiFe] hydrogenases. Required for nickel insertion into the metal center of the hydrogenase. The protein is Hydrogenase maturation factor HypA of Cereibacter sphaeroides (strain ATCC 17023 / DSM 158 / JCM 6121 / CCUG 31486 / LMG 2827 / NBRC 12203 / NCIMB 8253 / ATH 2.4.1.) (Rhodobacter sphaeroides).